Consider the following 227-residue polypeptide: Pyridoxal 5'-phosphate synthase subunit PdxT (227 aa).

L-glutamine is bound at residue 52–54; it reads GES. Catalysis depends on C84, which acts as the Nucleophile. Residues R118 and 149–150 contribute to the L-glutamine site; that span reads IR. Catalysis depends on charge relay system residues H189 and E191.

This sequence belongs to the glutaminase PdxT/SNO family. In the presence of PdxS, forms a dodecamer of heterodimers. Only shows activity in the heterodimer.

It carries out the reaction aldehydo-D-ribose 5-phosphate + D-glyceraldehyde 3-phosphate + L-glutamine = pyridoxal 5'-phosphate + L-glutamate + phosphate + 3 H2O + H(+). It catalyses the reaction L-glutamine + H2O = L-glutamate + NH4(+). It functions in the pathway cofactor biosynthesis; pyridoxal 5'-phosphate biosynthesis. Catalyzes the hydrolysis of glutamine to glutamate and ammonia as part of the biosynthesis of pyridoxal 5'-phosphate. The resulting ammonia molecule is channeled to the active site of PdxS. The protein is Pyridoxal 5'-phosphate synthase subunit PdxT of Renibacterium salmoninarum (strain ATCC 33209 / DSM 20767 / JCM 11484 / NBRC 15589 / NCIMB 2235).